The following is an 886-amino-acid chain: Translation initiation factor IF-2 (886 aa).

Disordered regions lie at residues 46–91 (LDHL…VEVR) and 121–297 (EQQK…HGFT). Over residues 72–82 (STLSVTGSTGK) the composition is skewed to polar residues. Composition is skewed to basic and acidic residues over residues 130–163 (AELK…AERK), 175–239 (AKSE…DHHL), and 246–260 (REAE…EQGT). The region spanning 386–555 (PRAPVVTVMG…LNQSELLELT (170 aa)) is the tr-type G domain. Positions 395 to 402 (GHVDHGKT) are G1. 395 to 402 (GHVDHGKT) serves as a coordination point for GTP. A G2 region spans residues 420 to 424 (GITQH). Positions 441 to 444 (DTPG) are G3. GTP contacts are provided by residues 441 to 445 (DTPGH) and 495 to 498 (NKMD). The interval 495–498 (NKMD) is G4. Residues 531-533 (SAK) form a G5 region.

Belongs to the TRAFAC class translation factor GTPase superfamily. Classic translation factor GTPase family. IF-2 subfamily.

Its subcellular location is the cytoplasm. Its function is as follows. One of the essential components for the initiation of protein synthesis. Protects formylmethionyl-tRNA from spontaneous hydrolysis and promotes its binding to the 30S ribosomal subunits. Also involved in the hydrolysis of GTP during the formation of the 70S ribosomal complex. The polypeptide is Translation initiation factor IF-2 (Pseudoalteromonas translucida (strain TAC 125)).